A 259-amino-acid chain; its full sequence is 1,2-dihydroxy-1,2-dihydronaphthalene dehydrogenase (259 aa).

Residues 8–35 (AITG…SALV) and aspartate 58 each bind NAD(+). Substrate is bound at residue serine 140. Tyrosine 153 (proton acceptor) is an active-site residue. Lysine 157 provides a ligand contact to NAD(+).

It belongs to the short-chain dehydrogenases/reductases (SDR) family.

It carries out the reaction (1R,2S)-1,2-dihydronaphthalene-1,2-diol + NAD(+) = naphthalene-1,2-diol + NADH + H(+). Its pathway is aromatic compound metabolism; naphthalene degradation. In terms of biological role, catalyzes the oxidation of naphthalene dihydrodiol into 1,2-dihydroxynaphthalene. The polypeptide is 1,2-dihydroxy-1,2-dihydronaphthalene dehydrogenase (Ralstonia sp).